Here is a 115-residue protein sequence, read N- to C-terminus: Large ribosomal subunit protein bL19 (115 aa).

This sequence belongs to the bacterial ribosomal protein bL19 family.

Functionally, this protein is located at the 30S-50S ribosomal subunit interface and may play a role in the structure and function of the aminoacyl-tRNA binding site. This Oleidesulfovibrio alaskensis (strain ATCC BAA-1058 / DSM 17464 / G20) (Desulfovibrio alaskensis) protein is Large ribosomal subunit protein bL19.